We begin with the raw amino-acid sequence, 332 residues long: Abl interactor homolog (332 aa).

Residues 73–104 are a coiled coil; the sequence is HITSLLQLQTNEMEKLNIEIQTLTQRVRMIHD. The tract at residues 152–332 is disordered; the sequence is SDINQNGVPP…NDFPPPPPPM (181 aa). Low complexity predominate over residues 164–206; sequence NHSNSSANLTSSSGHLAASSTSNSSTPSYQSPSYSSQPTISSG. Residues 221 to 247 show a composition bias toward pro residues; it reads APPPPSLSVPAAPPPPVMNVPPPPPTS. Over residues 248–257 the composition is skewed to polar residues; that stretch reads QRPSSVNNNA. The segment covering 277–314 has biased composition (pro residues); the sequence is LPPPPSFGLPPPPTLGDDFPPPPPPPVGSYDFPPPPAR.

The protein belongs to the ABI family. Part of a Scar/WAVE complex containing brk1, scrA, abiA, pirA and napA. Interacts with scrA.

Its function is as follows. Involved in regulation of actin and microtubule organization. Required for proper cytokinesis. This Dictyostelium discoideum (Social amoeba) protein is Abl interactor homolog (abiA).